Here is a 215-residue protein sequence, read N- to C-terminus: MSSFDEQNTRLPSMTLVPMVVEQTSRGERAYDIYSRMLKERVIFLTGQVEEHMANLIVAQMLFLEAENPEKDIYLYINSPGGVITAGMSIYDTMQFITPDVSTICIGQACSMGAFLLAAGAKSKRYCLPNARVMIHQPLGGFQGQASDIEIHAKEILKVKKRMNDLMAIHTKKTLKIIEKDTERDHFLSAEEAKKYGLVDCVLTERKDVKNFSKK.

Ser-111 functions as the Nucleophile in the catalytic mechanism. His-136 is a catalytic residue.

Belongs to the peptidase S14 family. In terms of assembly, fourteen ClpP subunits assemble into 2 heptameric rings which stack back to back to give a disk-like structure with a central cavity, resembling the structure of eukaryotic proteasomes.

The protein localises to the cytoplasm. The enzyme catalyses Hydrolysis of proteins to small peptides in the presence of ATP and magnesium. alpha-casein is the usual test substrate. In the absence of ATP, only oligopeptides shorter than five residues are hydrolyzed (such as succinyl-Leu-Tyr-|-NHMec, and Leu-Tyr-Leu-|-Tyr-Trp, in which cleavage of the -Tyr-|-Leu- and -Tyr-|-Trp bonds also occurs).. Its function is as follows. Cleaves peptides in various proteins in a process that requires ATP hydrolysis. Has a chymotrypsin-like activity. Plays a major role in the degradation of misfolded proteins. This is ATP-dependent Clp protease proteolytic subunit from Hamiltonella defensa subsp. Acyrthosiphon pisum (strain 5AT).